Reading from the N-terminus, the 211-residue chain is MTSQRTRARMVERLCTQGVTDEAVLTAMITVPRHIFVEEVLASRAYDDVALPINFEQTISNPFTVARMSQLLRAGSNPGKVLEIGTGSGYQTAILAQFSREVYSVERIGPLLTRTRGRLRELRINNVRLKHADGLLGLSEAAPFDGIILTAATPHMPPALLEQLAIRGRMVFPRGTSEQVLCVIERNLQGYTETILDEVKFVPMIPGIWQR.

The active site involves S60.

It belongs to the methyltransferase superfamily. L-isoaspartyl/D-aspartyl protein methyltransferase family.

The protein resides in the cytoplasm. The enzyme catalyses [protein]-L-isoaspartate + S-adenosyl-L-methionine = [protein]-L-isoaspartate alpha-methyl ester + S-adenosyl-L-homocysteine. Catalyzes the methyl esterification of L-isoaspartyl residues in peptides and proteins that result from spontaneous decomposition of normal L-aspartyl and L-asparaginyl residues. It plays a role in the repair and/or degradation of damaged proteins. This Nitrosospira multiformis (strain ATCC 25196 / NCIMB 11849 / C 71) protein is Protein-L-isoaspartate O-methyltransferase 2.